The chain runs to 149 residues: Large ribosomal subunit protein bL9 (149 aa).

The protein belongs to the bacterial ribosomal protein bL9 family.

In terms of biological role, binds to the 23S rRNA. The sequence is that of Large ribosomal subunit protein bL9 from Thermotoga petrophila (strain ATCC BAA-488 / DSM 13995 / JCM 10881 / RKU-1).